We begin with the raw amino-acid sequence, 173 residues long: 6,7-dimethyl-8-ribityllumazine synthase (173 aa).

5-amino-6-(D-ribitylamino)uracil contacts are provided by residues Y34, 65-67, and 94-96; these read ALE and CVI. Position 99–100 (99–100) interacts with (2S)-2-hydroxy-3-oxobutyl phosphate; it reads ET. H102 serves as the catalytic Proton donor. N127 lines the 5-amino-6-(D-ribitylamino)uracil pocket. R141 lines the (2S)-2-hydroxy-3-oxobutyl phosphate pocket.

It belongs to the DMRL synthase family.

It carries out the reaction (2S)-2-hydroxy-3-oxobutyl phosphate + 5-amino-6-(D-ribitylamino)uracil = 6,7-dimethyl-8-(1-D-ribityl)lumazine + phosphate + 2 H2O + H(+). It functions in the pathway cofactor biosynthesis; riboflavin biosynthesis; riboflavin from 2-hydroxy-3-oxobutyl phosphate and 5-amino-6-(D-ribitylamino)uracil: step 1/2. In terms of biological role, catalyzes the formation of 6,7-dimethyl-8-ribityllumazine by condensation of 5-amino-6-(D-ribitylamino)uracil with 3,4-dihydroxy-2-butanone 4-phosphate. This is the penultimate step in the biosynthesis of riboflavin. The sequence is that of 6,7-dimethyl-8-ribityllumazine synthase from Methylorubrum extorquens (strain CM4 / NCIMB 13688) (Methylobacterium extorquens).